The chain runs to 150 residues: Calmodulin (150 aa).

4 EF-hand domains span residues 9–44 (EQIA…LGQS), 45–80 (PTAA…KMKD), 82–117 (DNEE…LGER), and 118–150 (LSQE…ISSK). Positions 22, 24, 26, 28, 33, 58, 60, 62, 64, 69, 95, 97, 99, 101, 106, 131, 133, 135, and 142 each coordinate Ca(2+).

The protein belongs to the calmodulin family. Interacts with rng2.

Its subcellular location is the cytoplasm. It is found in the cytoskeleton. The protein localises to the microtubule organizing center. It localises to the spindle pole body. Functionally, calmodulin mediates the control of a large number of enzymes, ion channels and other proteins by Ca(2+). Among the enzymes to be stimulated by the calmodulin-Ca(2+) complex are a number of protein kinases and phosphatases. In Schizosaccharomyces pombe (strain 972 / ATCC 24843) (Fission yeast), this protein is Calmodulin (cam1).